The sequence spans 72 residues: Translation initiation factor IF-1 (72 aa).

The region spanning 1 to 72 is the S1-like domain; sequence MSKEDVIEMQ…TRGRITWRAK (72 aa).

Belongs to the IF-1 family. Component of the 30S ribosomal translation pre-initiation complex which assembles on the 30S ribosome in the order IF-2 and IF-3, IF-1 and N-formylmethionyl-tRNA(fMet); mRNA recruitment can occur at any time during PIC assembly.

The protein resides in the cytoplasm. One of the essential components for the initiation of protein synthesis. Stabilizes the binding of IF-2 and IF-3 on the 30S subunit to which N-formylmethionyl-tRNA(fMet) subsequently binds. Helps modulate mRNA selection, yielding the 30S pre-initiation complex (PIC). Upon addition of the 50S ribosomal subunit IF-1, IF-2 and IF-3 are released leaving the mature 70S translation initiation complex. This Clostridium acetobutylicum (strain ATCC 824 / DSM 792 / JCM 1419 / IAM 19013 / LMG 5710 / NBRC 13948 / NRRL B-527 / VKM B-1787 / 2291 / W) protein is Translation initiation factor IF-1.